The following is an 89-amino-acid chain: NADH-ubiquinone oxidoreductase chain 4L (89 aa).

The next 3 helical transmembrane spans lie at methionine 1–asparagine 21, isoleucine 22–valine 42, and isoleucine 57–phenylalanine 77.

Belongs to the complex I subunit 4L family.

The protein resides in the mitochondrion membrane. The catalysed reaction is a ubiquinone + NADH + 5 H(+)(in) = a ubiquinol + NAD(+) + 4 H(+)(out). Its function is as follows. Core subunit of the mitochondrial membrane respiratory chain NADH dehydrogenase (Complex I) that is believed to belong to the minimal assembly required for catalysis. Complex I functions in the transfer of electrons from NADH to the respiratory chain. The immediate electron acceptor for the enzyme is believed to be ubiquinone. The polypeptide is NADH-ubiquinone oxidoreductase chain 4L (ND4L) (Hypocrea jecorina (Trichoderma reesei)).